We begin with the raw amino-acid sequence, 576 residues long: Aspartate--tRNA ligase (576 aa).

Glu-173 provides a ligand contact to L-aspartate. Positions 197–200 are aspartate; sequence QLFK. Position 219 (Arg-219) interacts with L-aspartate. Residues 219–221 and Gln-228 contribute to the ATP site; that span reads RDE. An L-aspartate-binding site is contributed by His-438. Position 470 (Glu-470) interacts with ATP. Position 477 (Arg-477) interacts with L-aspartate. 522-525 is an ATP binding site; the sequence is GLDR.

The protein belongs to the class-II aminoacyl-tRNA synthetase family. Type 1 subfamily. In terms of assembly, homodimer.

It is found in the cytoplasm. It carries out the reaction tRNA(Asp) + L-aspartate + ATP = L-aspartyl-tRNA(Asp) + AMP + diphosphate. In terms of biological role, catalyzes the attachment of L-aspartate to tRNA(Asp) in a two-step reaction: L-aspartate is first activated by ATP to form Asp-AMP and then transferred to the acceptor end of tRNA(Asp). The polypeptide is Aspartate--tRNA ligase (Aster yellows witches'-broom phytoplasma (strain AYWB)).